The sequence spans 356 residues: INO80 complex subunit B (356 aa).

The tract at residues 1 to 71 (MSKLWRRGST…PSPAKPQLKL (71 aa)) is disordered. The span at 33–51 (HGVHKKKHKKHKKKHKKKH) shows a compositional bias: basic residues. A phosphoserine mark is found at Ser-97, Ser-99, Ser-127, Ser-130, and Ser-132. The disordered stretch occupies residues 124 to 150 (DEDSNLSPSPLRDLSGGLGGQEEEEEQ). Residues 213–245 (LLKREERARKRRLQAARRAEEHKNQTIERLTKT) adopt a coiled-coil conformation. Disordered regions lie at residues 246-269 (AATS…AAAP) and 286-310 (FPPG…PRCS). The segment at 305–336 (PPPRCSVPGCPHPRRYACSRTGQALCSLQCYR) adopts an HIT-type zinc-finger fold.

Component of the chromatin remodeling INO80 complex; specifically part of a complex module associated with the helicase ATP-binding and the helicase C-terminal domain of INO80. Interacts with RP9.

It localises to the nucleus. Its subcellular location is the nucleolus. Induces growth and cell cycle arrests at the G1 phase of the cell cycle. Functionally, proposed core component of the chromatin remodeling INO80 complex which is involved in transcriptional regulation, DNA replication and probably DNA repair. The protein is INO80 complex subunit B (INO80B) of Homo sapiens (Human).